A 211-amino-acid polypeptide reads, in one-letter code: Protein-L-isoaspartate O-methyltransferase 1 (211 aa).

The active site involves S62.

It belongs to the methyltransferase superfamily. L-isoaspartyl/D-aspartyl protein methyltransferase family.

The protein resides in the cytoplasm. The catalysed reaction is [protein]-L-isoaspartate + S-adenosyl-L-methionine = [protein]-L-isoaspartate alpha-methyl ester + S-adenosyl-L-homocysteine. Its function is as follows. Catalyzes the methyl esterification of L-isoaspartyl residues in peptides and proteins that result from spontaneous decomposition of normal L-aspartyl and L-asparaginyl residues. It plays a role in the repair and/or degradation of damaged proteins. This Shewanella sediminis (strain HAW-EB3) protein is Protein-L-isoaspartate O-methyltransferase 1.